An 89-amino-acid chain; its full sequence is Small ribosomal subunit protein uS15 (89 aa).

The protein belongs to the universal ribosomal protein uS15 family. In terms of assembly, part of the 30S ribosomal subunit. Forms a bridge to the 50S subunit in the 70S ribosome, contacting the 23S rRNA.

One of the primary rRNA binding proteins, it binds directly to 16S rRNA where it helps nucleate assembly of the platform of the 30S subunit by binding and bridging several RNA helices of the 16S rRNA. Functionally, forms an intersubunit bridge (bridge B4) with the 23S rRNA of the 50S subunit in the ribosome. This is Small ribosomal subunit protein uS15 from Bacillus pumilus (strain SAFR-032).